Consider the following 272-residue polypeptide: 3-methyl-2-oxobutanoate hydroxymethyltransferase (272 aa).

The Mg(2+) site is built by aspartate 43 and aspartate 82. Residues 43–44 (DS), aspartate 82, and lysine 112 each bind 3-methyl-2-oxobutanoate. Glutamate 114 provides a ligand contact to Mg(2+). The active-site Proton acceptor is glutamate 179.

The protein belongs to the PanB family. As to quaternary structure, homodecamer; pentamer of dimers. Requires Mg(2+) as cofactor.

The protein resides in the cytoplasm. The enzyme catalyses 3-methyl-2-oxobutanoate + (6R)-5,10-methylene-5,6,7,8-tetrahydrofolate + H2O = 2-dehydropantoate + (6S)-5,6,7,8-tetrahydrofolate. It functions in the pathway cofactor biosynthesis; (R)-pantothenate biosynthesis; (R)-pantoate from 3-methyl-2-oxobutanoate: step 1/2. Functionally, catalyzes the reversible reaction in which hydroxymethyl group from 5,10-methylenetetrahydrofolate is transferred onto alpha-ketoisovalerate to form ketopantoate. The sequence is that of 3-methyl-2-oxobutanoate hydroxymethyltransferase from Staphylococcus aureus (strain JH1).